The following is a 786-amino-acid chain: Receptor-like protein 30 (786 aa).

The first 30 residues, 1–30 (MIPSQSNSFSGSVITLYFFLLGSLVLRTLA), serve as a signal peptide directing secretion. Over 31 to 739 (SSRLHYCRHD…SEPEEQVINW (709 aa)) the chain is Extracellular. N-linked (GlcNAc...) asparagine glycans are attached at residues Asn-67, Asn-98, Asn-115, and Asn-133. 4 LRR repeats span residues 110-133 (LQQL…SLGN), 134-158 (LSRL…VSKL), 159-181 (NQLR…SFTN), and 183-204 (TKLS…SFIL). N-linked (GlcNAc...) asparagine glycosylation is found at Asn-181, Asn-199, and Asn-206. LRR repeat units lie at residues 207–231 (LTSL…MSGL), 233–255 (NLKY…LFTI), 257–279 (SLQI…NISS), 280–304 (SSRL…ISEI), 305–328 (HSLI…ISKL), 329–352 (VNLQ…LWGL), 354–375 (TVTL…ALDG), 376–399 (ESMQ…ICKQ), 400–423 (RFLK…LKNS), 425–447 (YWLK…VFVN), 448–472 (ASML…LINC), 474–496 (GMEL…LVSL), 497–524 (PSLR…GFQH), and 526–546 (RLID…YFSN). The N-linked (GlcNAc...) asparagine glycan is linked to Asn-276. Asn-338 carries N-linked (GlcNAc...) asparagine glycosylation. 5 N-linked (GlcNAc...) asparagine glycosylation sites follow: Asn-413, Asn-422, Asn-434, Asn-447, and Asn-471. Asn-558 carries N-linked (GlcNAc...) asparagine glycosylation. LRR repeat units follow at residues 596–621 (IPYF…VGLL), 622–645 (KELR…LANL), 646–669 (TNLE…LGSL), and 671–694 (FLST…QFQS). Residues Asn-628 and Asn-644 are each glycosylated (N-linked (GlcNAc...) asparagine). Asn-676 carries an N-linked (GlcNAc...) asparagine glycan. The helical transmembrane segment at 740–760 (IAAAIAYGPGVFCGLVIGHIF) threads the bilayer. The Cytoplasmic portion of the chain corresponds to 761–786 (FTAHKHEWFMEKFHRNKRRVVTTSAR).

It belongs to the RLP family.

Its subcellular location is the cell membrane. Receptor for microbe-associated molecular patterns (MAMPs) that induces a BAK1-dependent basal immune response to necrotrophic fungi (e.g. S.sclerotiorum) in the presence of MAMPs (e.g. flg22 and SCLEROTINIA CULTURE FILTRATE ELICITOR1 (SCFE1) from the necrotrophic fungal pathogen S.sclerotiorum). Functionality seems to depend on the presence of the receptor kinase SOBIR1 as an adapter protein. Required for full non-host resistance to bacterial pathogens (e.g. P.syringae pv phaseolicola). The polypeptide is Receptor-like protein 30 (Arabidopsis thaliana (Mouse-ear cress)).